We begin with the raw amino-acid sequence, 87 residues long: MENDKGQLVELYVPRKCSATNRIIKAKDHSSVQINIAQVDEEGRAIPGEYVTYALSGYIRARGEADDSLNRLAQQDGLLKNVWSYSR.

Belongs to the eukaryotic ribosomal protein eS21 family. In terms of assembly, component of the small ribosomal subunit. Mature ribosomes consist of a small (40S) and a large (60S) subunit. The 40S subunit contains about 33 different proteins and 1 molecule of RNA (18S). The 60S subunit contains about 49 different proteins and 3 molecules of RNA (25S, 5.8S and 5S).

The protein resides in the cytoplasm. In terms of biological role, required for the processing of the 20S rRNA-precursor to mature 18S rRNA in a late step of the maturation of 40S ribosomal subunits. Has a physiological role leading to 18S rRNA stability. In Kluyveromyces lactis (strain ATCC 8585 / CBS 2359 / DSM 70799 / NBRC 1267 / NRRL Y-1140 / WM37) (Yeast), this protein is Small ribosomal subunit protein eS21 (RPS21).